Here is a 234-residue protein sequence, read N- to C-terminus: Cyclin-J18 (234 aa).

This sequence belongs to the cyclin family.

This chain is Cyclin-J18 (CYCJ18), found in Arabidopsis thaliana (Mouse-ear cress).